Consider the following 83-residue polypeptide: NAD(P)H-quinone oxidoreductase subunit L (83 aa).

The next 2 helical transmembrane spans lie at 15-35 (LFVLLAYGAVLGTYLIAVPLA) and 53-73 (LGVYGLVFLFFPGMIVFAPFI).

The protein belongs to the complex I NdhL subunit family. In terms of assembly, NDH-1 can be composed of about 15 different subunits; different subcomplexes with different compositions have been identified which probably have different functions.

Its subcellular location is the cellular thylakoid membrane. It carries out the reaction a plastoquinone + NADH + (n+1) H(+)(in) = a plastoquinol + NAD(+) + n H(+)(out). It catalyses the reaction a plastoquinone + NADPH + (n+1) H(+)(in) = a plastoquinol + NADP(+) + n H(+)(out). In terms of biological role, NDH-1 shuttles electrons from an unknown electron donor, via FMN and iron-sulfur (Fe-S) centers, to quinones in the respiratory and/or the photosynthetic chain. The immediate electron acceptor for the enzyme in this species is believed to be plastoquinone. Couples the redox reaction to proton translocation, and thus conserves the redox energy in a proton gradient. Cyanobacterial NDH-1 also plays a role in inorganic carbon-concentration. The chain is NAD(P)H-quinone oxidoreductase subunit L from Synechococcus sp. (strain CC9902).